A 335-amino-acid chain; its full sequence is Nucleoid-associated protein PputW619_4243 (335 aa).

The protein belongs to the YejK family.

The protein localises to the cytoplasm. It is found in the nucleoid. The chain is Nucleoid-associated protein PputW619_4243 from Pseudomonas putida (strain W619).